A 392-amino-acid chain; its full sequence is Heat-inducible transcription repressor HrcA (392 aa).

The protein belongs to the HrcA family.

Functionally, negative regulator of class I heat shock genes (grpE-dnaK-dnaJ and groELS operons). Prevents heat-shock induction of these operons. The polypeptide is Heat-inducible transcription repressor HrcA (Chlamydia trachomatis serovar D (strain ATCC VR-885 / DSM 19411 / UW-3/Cx)).